Reading from the N-terminus, the 342-residue chain is Replication factor C subunit 3 (342 aa).

ATP is bound at residue 63–70 (GPPGTGKT).

The protein belongs to the activator 1 small subunits family. Heteropentamer of subunits rfc1, rfc2, rfc3, rfc4 and rfc5 that forms a complex (RFC) with PCNA in the presence of ATP. Two other complexes exist where rfc1 can be replaced by either ctf18 or elg1 to form the ctf18-RFC or the elg1-RFC complexes respectively.

The protein resides in the nucleus. Functionally, the elongation of primed DNA templates by DNA polymerase delta and epsilon requires the action of the accessory proteins PCNA and activator 1. Subunit 3 binds ATP. Also involved in replication and DNA damage checkpoint controls, probably functioning as a checkpoint sensor. The sequence is that of Replication factor C subunit 3 (rfc3) from Schizosaccharomyces pombe (strain 972 / ATCC 24843) (Fission yeast).